Here is a 449-residue protein sequence, read N- to C-terminus: Exodeoxyribonuclease 7 large subunit (449 aa).

Belongs to the XseA family. In terms of assembly, heterooligomer composed of large and small subunits.

It is found in the cytoplasm. The enzyme catalyses Exonucleolytic cleavage in either 5'- to 3'- or 3'- to 5'-direction to yield nucleoside 5'-phosphates.. In terms of biological role, bidirectionally degrades single-stranded DNA into large acid-insoluble oligonucleotides, which are then degraded further into small acid-soluble oligonucleotides. The polypeptide is Exodeoxyribonuclease 7 large subunit (Salmonella agona (strain SL483)).